The primary structure comprises 842 residues: Protein P (842 aa).

A terminal protein domain (TP) region spans residues 1 to 177; the sequence is MPLSYQHFRR…FCGSPYSWEQ (177 aa). Residues 178–345 form a spacer region; that stretch reads ELHHGAFLDG…YCLTHLVNLL (168 aa). Residues 186–273 form a disordered region; it reads DGPSRMGEES…AKNIASRSAS (88 aa). Polar residues predominate over residues 223–239; it reads GPQSQQRPLDGSQQGRS. Positions 346–689 are polymerase/reverse transcriptase domain (RT); the sequence is EDWGPCTEHG…YLNLYPVARQ (344 aa). The Reverse transcriptase domain maps to 356–599; the sequence is RHHIRIPRTP…YSLNFMGYVI (244 aa). Mg(2+) contacts are provided by Asp-428, Asp-550, and Asp-551.

Belongs to the hepadnaviridae P protein family.

It carries out the reaction DNA(n) + a 2'-deoxyribonucleoside 5'-triphosphate = DNA(n+1) + diphosphate. The enzyme catalyses Endonucleolytic cleavage to 5'-phosphomonoester.. Its activity is regulated as follows. Activated by host HSP70 and HSP40 in vitro to be able to bind the epsilon loop of the pgRNA. Because deletion of the RNase H region renders the protein partly chaperone-independent, the chaperones may be needed indirectly to relieve occlusion of the RNA-binding site by this domain. Inhibited by several reverse-transcriptase inhibitors: Lamivudine, Adefovir and Entecavir. Functionally, multifunctional enzyme that converts the viral RNA genome into dsDNA in viral cytoplasmic capsids. This enzyme displays a DNA polymerase activity that can copy either DNA or RNA templates, and a ribonuclease H (RNase H) activity that cleaves the RNA strand of RNA-DNA heteroduplexes in a partially processive 3'- to 5'-endonucleasic mode. Neo-synthesized pregenomic RNA (pgRNA) are encapsidated together with the P protein, and reverse-transcribed inside the nucleocapsid. Initiation of reverse-transcription occurs first by binding the epsilon loop on the pgRNA genome, and is initiated by protein priming, thereby the 5'-end of (-)DNA is covalently linked to P protein. Partial (+)DNA is synthesized from the (-)DNA template and generates the relaxed circular DNA (RC-DNA) genome. After budding and infection, the RC-DNA migrates in the nucleus, and is converted into a plasmid-like covalently closed circular DNA (cccDNA). The activity of P protein does not seem to be necessary for cccDNA generation, and is presumably released from (+)DNA by host nuclear DNA repair machinery. The sequence is that of Protein P from Homo sapiens (Human).